A 460-amino-acid chain; its full sequence is Cysteine--tRNA ligase (460 aa).

Cys-28 is a Zn(2+) binding site. Positions 30 to 40 (MTVYDYCHLGH) match the 'HIGH' region motif. Residues Cys-209, His-234, and Glu-238 each contribute to the Zn(2+) site. Positions 266–270 (KMSKS) match the 'KMSKS' region motif. Residue Lys-269 participates in ATP binding.

Belongs to the class-I aminoacyl-tRNA synthetase family. Monomer. Zn(2+) serves as cofactor.

It localises to the cytoplasm. The catalysed reaction is tRNA(Cys) + L-cysteine + ATP = L-cysteinyl-tRNA(Cys) + AMP + diphosphate. In Pseudomonas fluorescens (strain Pf0-1), this protein is Cysteine--tRNA ligase.